A 300-amino-acid polypeptide reads, in one-letter code: Transcription initiation factor IIB (300 aa).

Residues Asn-2–Glu-34 form a TFIIB-type zinc finger. Positions 7, 10, 26, and 29 each coordinate Zn(2+). Repeat copies occupy residues Ser-114 to Leu-197 and Asp-210 to Glu-291.

It belongs to the TFIIB family.

Stabilizes TBP binding to an archaeal box-A promoter. Also responsible for recruiting RNA polymerase II to the pre-initiation complex (DNA-TBP-TFIIB). This is Transcription initiation factor IIB from Pyrococcus furiosus (strain ATCC 43587 / DSM 3638 / JCM 8422 / Vc1).